A 120-amino-acid chain; its full sequence is Large ribosomal subunit protein uL18 (120 aa).

Belongs to the universal ribosomal protein uL18 family. Part of the 50S ribosomal subunit; part of the 5S rRNA/L5/L18/L25 subcomplex. Contacts the 5S and 23S rRNAs.

In terms of biological role, this is one of the proteins that bind and probably mediate the attachment of the 5S RNA into the large ribosomal subunit, where it forms part of the central protuberance. The protein is Large ribosomal subunit protein uL18 of Ehrlichia ruminantium (strain Gardel).